The sequence spans 463 residues: L-cystine uptake protein TcyP (463 aa).

Transmembrane regions (helical) follow at residues 3 to 23 (TLLV…LFVM), 34 to 54 (VFTA…IYGP), 73 to 93 (YVKL…LGAF), 105 to 125 (ISGL…AVGI), 184 to 204 (PTST…FLGV), 225 to 245 (IVMR…LAIM), 262 to 282 (MFVI…LLLL), 338 to 358 (LSIG…MMIA), 369 to 389 (VFII…AGVG), and 394 to 414 (FAAL…GLLI).

It belongs to the dicarboxylate/amino acid:cation symporter (DAACS) (TC 2.A.23) family.

Its subcellular location is the cell membrane. In terms of biological role, mediates uptake of L-cystine, the oxidized form of L-cysteine. Although it is more specific for L-cystine, it could also transport a much broader range of amino acids and sulfur compounds including S-methylcysteine. The sequence is that of L-cystine uptake protein TcyP (tcyP) from Bacillus subtilis (strain 168).